A 145-amino-acid polypeptide reads, in one-letter code: Basic phospholipase A2 PC17 (145 aa).

The signal sequence occupies residues Met-1–Ala-21. The propeptide occupies Ile-22 to Arg-27. 7 cysteine pairs are disulfide-bonded: Cys-38/Cys-98, Cys-54/Cys-144, Cys-56/Cys-72, Cys-71/Cys-125, Cys-78/Cys-118, Cys-87/Cys-111, and Cys-105/Cys-116. 3 residues coordinate Ca(2+): Tyr-55, Gly-57, and Gly-59. His-75 is an active-site residue. A Ca(2+)-binding site is contributed by Asp-76. Asp-119 is a catalytic residue.

It belongs to the phospholipase A2 family. Group I subfamily. D49 sub-subfamily. Ca(2+) is required as a cofactor. In terms of tissue distribution, expressed by the venom gland.

It is found in the secreted. The catalysed reaction is a 1,2-diacyl-sn-glycero-3-phosphocholine + H2O = a 1-acyl-sn-glycero-3-phosphocholine + a fatty acid + H(+). Its function is as follows. Snake venom phospholipase A2 (PLA2) that inhibits neuromuscular transmission by blocking acetylcholine release from the nerve termini. PLA2 catalyzes the calcium-dependent hydrolysis of the 2-acyl groups in 3-sn-phosphoglycerides. The polypeptide is Basic phospholipase A2 PC17 (Laticauda colubrina (Yellow-lipped sea krait)).